A 168-amino-acid polypeptide reads, in one-letter code: Small ribosomal subunit protein uS9 (168 aa).

Low complexity predominate over residues 1 to 11; the sequence is MAQNEELTTEA. A disordered region spans residues 1–36; it reads MAQNEELTTEAVEAEENPTSYTSESSAAEAAPKKER.

It belongs to the universal ribosomal protein uS9 family.

The protein is Small ribosomal subunit protein uS9 of Pseudarthrobacter chlorophenolicus (strain ATCC 700700 / DSM 12829 / CIP 107037 / JCM 12360 / KCTC 9906 / NCIMB 13794 / A6) (Arthrobacter chlorophenolicus).